The primary structure comprises 409 residues: Glycinol 4-dimethylallyltransferase (409 aa).

Residues 1-44 constitute a chloroplast transit peptide; that stretch reads MDWGLAISSHPKPYSVTTGGNLWRSKHTTKNIYFASSWISKASR. 9 helical membrane-spanning segments follow: residues 113–133, 148–168, 200–220, 222–242, 249–269, 287–307, 330–350, 354–374, and 388–408; these read LSAF…LCAF, LSFL…EIYL, VIIS…TGSW, LICN…DVPL, PFVA…ISYF, LGFL…SKDI, AFWI…LAGA, HFWT…ILWY, and GSFY…MALI.

This sequence belongs to the UbiA prenyltransferase family. It depends on Mg(2+) as a cofactor. The cofactor is Mn(2+). Co(2+) is required as a cofactor.

The protein resides in the plastid. The protein localises to the chloroplast membrane. The catalysed reaction is (6aS,11aS)-3,6a,9-trihydroxypterocarpan + dimethylallyl diphosphate = (6aS,11aS)-2-dimethylallyl-3,6a,9-trihydroxypterocarpan + diphosphate. It carries out the reaction (6aS,11aS)-3,6a,9-trihydroxypterocarpan + dimethylallyl diphosphate = (6aS,11aS)-4-dimethylallyl-3,6a,9-trihydroxypterocarpan + diphosphate. It functions in the pathway phytoalexin biosynthesis; pterocarpan phytoalexin biosynthesis. Functionally, proposed to be involved in the biosynthesis of pterocarpan phytoalexins, specifically glyceollins. Can act as a prenyltransferase towards glycinol which is the direct precursor of glyceollins. Seems to be specific for prenylation at C-4 thus producing glyceollin I. This Glycine max (Soybean) protein is Glycinol 4-dimethylallyltransferase (G4DT).